The following is a 179-amino-acid chain: Putative 5'(3')-deoxyribonucleotidase (179 aa).

Residue Asp9 is the Nucleophile of the active site. The Mg(2+) site is built by Asp9, Asp11, and Asp135. Residue Asp11 is the Proton donor of the active site.

The protein belongs to the 5'(3')-deoxyribonucleotidase family. Requires Mg(2+) as cofactor.

Dephosphorylates the 5' and 2'(3')-phosphates of deoxyribonucleotides. The sequence is that of Putative 5'(3')-deoxyribonucleotidase from Staphylococcus epidermidis (strain ATCC 12228 / FDA PCI 1200).